The chain runs to 65 residues: Protein TrbD (65 aa).

This chain is Protein TrbD (trbD), found in Escherichia coli (strain K12).